The following is a 353-amino-acid chain: Holliday junction branch migration complex subunit RuvB (353 aa).

Residues 4–190 (HYIRFKIMTN…FGIPMRLNFY (187 aa)) form a large ATPase domain (RuvB-L) region. ATP is bound by residues Ile29, Arg30, Gly71, Lys74, Thr75, Thr76, 137–139 (EDF), Arg180, Tyr190, and Arg227. Thr75 contacts Mg(2+). Positions 191–261 (NTEELKKVLN…ISDFGLNRLE (71 aa)) are small ATPAse domain (RuvB-S). Residues 264-353 (RIGLDSNDYR…HQFNIFNEHE (90 aa)) form a head domain (RuvB-H) region. Residues Arg300, Arg319, and Arg324 each coordinate DNA.

The protein belongs to the RuvB family. Homohexamer. Forms an RuvA(8)-RuvB(12)-Holliday junction (HJ) complex. HJ DNA is sandwiched between 2 RuvA tetramers; dsDNA enters through RuvA and exits via RuvB. An RuvB hexamer assembles on each DNA strand where it exits the tetramer. Each RuvB hexamer is contacted by two RuvA subunits (via domain III) on 2 adjacent RuvB subunits; this complex drives branch migration. In the full resolvosome a probable DNA-RuvA(4)-RuvB(12)-RuvC(2) complex forms which resolves the HJ.

It localises to the cytoplasm. It catalyses the reaction ATP + H2O = ADP + phosphate + H(+). In terms of biological role, the RuvA-RuvB-RuvC complex processes Holliday junction (HJ) DNA during genetic recombination and DNA repair, while the RuvA-RuvB complex plays an important role in the rescue of blocked DNA replication forks via replication fork reversal (RFR). RuvA specifically binds to HJ cruciform DNA, conferring on it an open structure. The RuvB hexamer acts as an ATP-dependent pump, pulling dsDNA into and through the RuvAB complex. RuvB forms 2 homohexamers on either side of HJ DNA bound by 1 or 2 RuvA tetramers; 4 subunits per hexamer contact DNA at a time. Coordinated motions by a converter formed by DNA-disengaged RuvB subunits stimulates ATP hydrolysis and nucleotide exchange. Immobilization of the converter enables RuvB to convert the ATP-contained energy into a lever motion, pulling 2 nucleotides of DNA out of the RuvA tetramer per ATP hydrolyzed, thus driving DNA branch migration. The RuvB motors rotate together with the DNA substrate, which together with the progressing nucleotide cycle form the mechanistic basis for DNA recombination by continuous HJ branch migration. Branch migration allows RuvC to scan DNA until it finds its consensus sequence, where it cleaves and resolves cruciform DNA. The sequence is that of Holliday junction branch migration complex subunit RuvB from Rickettsia massiliae (strain Mtu5).